Reading from the N-terminus, the 95-residue chain is Large ribosomal subunit protein uL23 (95 aa).

This sequence belongs to the universal ribosomal protein uL23 family. In terms of assembly, part of the 50S ribosomal subunit. Contacts protein L29 and trigger factor when it is bound to the ribosome.

One of the early assembly protein it binds 23S rRNA. One of the proteins that surrounds the polypeptide exit tunnel on the outside of the subunit. Forms the main docking site for trigger factor binding to the ribosome. The sequence is that of Large ribosomal subunit protein uL23 from Deinococcus radiodurans (strain ATCC 13939 / DSM 20539 / JCM 16871 / CCUG 27074 / LMG 4051 / NBRC 15346 / NCIMB 9279 / VKM B-1422 / R1).